Here is a 261-residue protein sequence, read N- to C-terminus: 1-(5-phosphoribosyl)-5-[(5-phosphoribosylamino)methylideneamino] imidazole-4-carboxamide isomerase (261 aa).

Catalysis depends on Asp-8, which acts as the Proton acceptor. Asp-139 functions as the Proton donor in the catalytic mechanism.

This sequence belongs to the HisA/HisF family.

Its subcellular location is the cytoplasm. The enzyme catalyses 1-(5-phospho-beta-D-ribosyl)-5-[(5-phospho-beta-D-ribosylamino)methylideneamino]imidazole-4-carboxamide = 5-[(5-phospho-1-deoxy-D-ribulos-1-ylimino)methylamino]-1-(5-phospho-beta-D-ribosyl)imidazole-4-carboxamide. It functions in the pathway amino-acid biosynthesis; L-histidine biosynthesis; L-histidine from 5-phospho-alpha-D-ribose 1-diphosphate: step 4/9. The chain is 1-(5-phosphoribosyl)-5-[(5-phosphoribosylamino)methylideneamino] imidazole-4-carboxamide isomerase from Janthinobacterium sp. (strain Marseille) (Minibacterium massiliensis).